Reading from the N-terminus, the 453-residue chain is uncharacterized protein (453 aa).

To S.faecalis plasmid PAM373 EP0012.

This is an uncharacterized protein from Listeria innocua serovar 6a (strain ATCC BAA-680 / CLIP 11262).